Consider the following 208-residue polypeptide: Ras-related protein Rab-6A (208 aa).

Ser2 is modified (N-acetylserine). GTP-binding residues include Ser23, Val24, Gly25, Lys26, Thr27, Ser28, Asp39, Asn40, Tyr42, and Thr45. Mg(2+) is bound at residue Thr27. Residues 32 to 50 carry the Switch 1 motif; that stretch reads RFMYDSFDNTYQATIGIDF. Positions 45 and 68 each coordinate Mg(2+). A Switch 2 motif is present at residues 69 to 88; that stretch reads TAGQERFRSLIPSYIRDSAA. Residues Gly71, Asn126, Lys127, Asp129, Ser156, Ala157, and Lys158 each contribute to the GTP site. 2 S-geranylgeranyl cysteine lipidation sites follow: Cys206 and Cys208. The residue at position 208 (Cys208) is a Cysteine methyl ester.

It belongs to the small GTPase superfamily. Rab family. Mg(2+) serves as cofactor.

The protein localises to the golgi apparatus membrane. The catalysed reaction is GTP + H2O = GDP + phosphate + H(+). Regulated by guanine nucleotide exchange factors (GEFs) which promote the exchange of bound GDP for free GTP. Regulated by GTPase activating proteins (GAPs) which increase the GTP hydrolysis activity. Inhibited by GDP dissociation inhibitors (GDIs). Its function is as follows. The small GTPases Rab are key regulators of intracellular membrane trafficking, from the formation of transport vesicles to their fusion with membranes. Rabs cycle between an inactive GDP-bound form and an active GTP-bound form that is able to recruit to membranes different sets of downstream effectors directly responsible for vesicle formation, movement, tethering and fusion. RAB6A acts as a regulator of COPI-independent retrograde transport from the Golgi apparatus towards the endoplasmic reticulum (ER). This is Ras-related protein Rab-6A (RAB6A) from Gallus gallus (Chicken).